Here is a 427-residue protein sequence, read N- to C-terminus: MTAIVDIIGREILDSRGNPTVEVDVVLEDGSVGRAAVPSGASTGAHEAVELRDGDKARYLGKGVLKAVEAVNGELFDALGGMDAEQQVQIDQTMIELDGTPNKGRLGANAILGVSLAVAKAAASSYDLPLYRYVGGTSARTLPVPMMNIINGGAHADNPIDFQEFMIMPVGAASFSEALRCGSEIFHTLKGELKKAGHNTNVGDEGGFAPNLPSADAALDFVMAAIGKAGYKAGEDVMIALDPASTEFFKNGKYVYEAEGRSLGPQEQAKYLADLVARYPIVSIEDGMAEDDIEGWKAITDLIGDKCQLVGDDLFVTNVTRLADGIKNGYANSILIKVNQIGTLTETLAAVEMAHKAGYTAVMSHRSGETEDSTIADLAVATNCGQIKTGSLARADRTAKYNQLLRIEQELGAQAHYAGKAALKAFR.

Position 163 (glutamine 163) interacts with (2R)-2-phosphoglycerate. Catalysis depends on glutamate 205, which acts as the Proton donor. Residues aspartate 242, glutamate 285, and aspartate 312 each contribute to the Mg(2+) site. 4 residues coordinate (2R)-2-phosphoglycerate: lysine 337, arginine 366, serine 367, and lysine 388. Lysine 337 functions as the Proton acceptor in the catalytic mechanism.

This sequence belongs to the enolase family. Mg(2+) serves as cofactor.

Its subcellular location is the cytoplasm. It is found in the secreted. The protein resides in the cell surface. It catalyses the reaction (2R)-2-phosphoglycerate = phosphoenolpyruvate + H2O. It participates in carbohydrate degradation; glycolysis; pyruvate from D-glyceraldehyde 3-phosphate: step 4/5. Catalyzes the reversible conversion of 2-phosphoglycerate (2-PG) into phosphoenolpyruvate (PEP). It is essential for the degradation of carbohydrates via glycolysis. In Rhodopseudomonas palustris (strain BisB5), this protein is Enolase.